The chain runs to 238 residues: MDSVSNLKIAVLINTPPDETDFQSVVRECFREAFASIAPTGEVDFYDPVVERKFPDASRYDLVVLSGGKIDAACSDPWVLGVLDYVRITARDLPKTKILAVCWGHQAVSRAFGGQVRPVPAGEITAIEDIRLTDAGMKFFPFAATSGSYRAIELHSGEVYTPPPGFISLAENQECFINDTNNVLTFQAHPEISHELASKLILEEDKKHSRNSSAEVLGIDRPTEGLKLLERVLQWLSE.

Residues 8–238 (KIAVLINTPP…LERVLQWLSE (231 aa)) enclose the Glutamine amidotransferase type-1 domain. The active-site Nucleophile is the C102. Active-site residues include H189 and E191.

The protein belongs to the peptidase C26 family.

The protein operates within pigment biosynthesis. Glutamine amidotransferase-like protein; part of the gene cluster that mediates the biosynthesis of the yellow pigment chrysogine. the NRPS chyA mediates the condensation of anthranilic acid and alanine into the intermediate 2-(2-aminopropanamido)benzoic acid. The remainder of the pathway is highly branched yielding at least 13 chrysogine-related compounds. The malonyl transferase chyE converts 2-(2-aminopropanamido)benzoic acid and 2-(2-aminopropanamido)benzamidine into 2-(2-(2-carboxyacetamido)propanamido)benzoic acid and 3-((1-((2-carbamoylphenyl)amino)-1-oxopropan-2-yl)amino)-3-oxopropanoic acid, respectively. ChyD is an amidase, being responsible for the amidation of the carboxylic acid moiety of 2-(2-aminopropanamido)benzoic acid, 2-(2-(2-carboxyacetamido)propanamido)benzoic acid and 2-(2-((4-amino-1-carboxy-4-oxobutyl)amino)propanamido)benzoic acid. ChyC is involved in the same reactions as ChyD, but plays a more minor role in the amidation reactions compared to chyD. The oxidoreductases chyH and chyM are involved in oxidation reactions that form N-pyruvoylanthranilamide from 2-(2-aminopropanamido)benzamidine and (1-((2-carbamoylphenyl)amino)-1-oxopropan-2-yl)glutamine, respectively. N-pyruvoylanthranilamide is further converted via two further branches in the pathway, yielding chrysogine and additional chrysogine-related coumpounds. Chrysogine is likely formed by a spontaneous ring closure from N-pyruvoylanthranilamide. The chain is Glutamine amidotransferase-like protein chyE from Penicillium rubens (strain ATCC 28089 / DSM 1075 / NRRL 1951 / Wisconsin 54-1255) (Penicillium chrysogenum).